Consider the following 335-residue polypeptide: Phosphate acyltransferase (335 aa).

The protein belongs to the PlsX family. As to quaternary structure, homodimer. Probably interacts with PlsY.

It is found in the cytoplasm. The catalysed reaction is a fatty acyl-[ACP] + phosphate = an acyl phosphate + holo-[ACP]. The protein operates within lipid metabolism; phospholipid metabolism. In terms of biological role, catalyzes the reversible formation of acyl-phosphate (acyl-PO(4)) from acyl-[acyl-carrier-protein] (acyl-ACP). This enzyme utilizes acyl-ACP as fatty acyl donor, but not acyl-CoA. This Streptococcus equi subsp. equi (strain 4047) protein is Phosphate acyltransferase.